The chain runs to 1557 residues: Target of rapamycin complex 1 subunit KOG1 (1557 aa).

4 HEAT repeats span residues 548–586 (RHPP…WAVY), 588–625 (SLSI…IDYK), 777–814 (CMNT…GFQD), and 888–925 (RQEI…RYSN). Over residues 1084-1098 (SESNSDSDTQSSNTS) the composition is skewed to low complexity. The interval 1084-1114 (SESNSDSDTQSSNTSMKSHTSKKGPSGLYLL) is disordered. WD repeat units lie at residues 1207-1248 (NNKS…SKFS), 1252-1293 (PFGT…DTFK), 1296-1346 (SAWR…VEVD), 1350-1390 (KTSS…RDSM), 1400-1440 (KQGV…PVES), 1452-1492 (SQQK…NSFK), and 1517-1557 (TSDA…IDYF).

This sequence belongs to the WD repeat RAPTOR family. The target of rapamycin complex 1 (TORC1) is composed of at least KOG1, LST8, TCO89 and either TOR1 (TORC1-A) or TOR2 (TORC1-B). Interacts with PIB2; following activation of PIB2 by glutamine or cysteine. TORC1 binds to and is inhibited by FKBP-rapamycin.

It is found in the cell membrane. Its subcellular location is the vacuole membrane. In terms of biological role, component of TORC1, which regulates multiple cellular processes to control cell growth in response to environmental signals. Nutrient limitation and environmental stress signals cause inactivation of TORC1. Active TORC1 positively controls ribosome biogenesis via control of rRNA, ribosomal protein and tRNA gene expression, and rRNA processing. TORC1 positively controls protein biosynthesis by regulation of mRNA stability, translation initiation factor activity, and high-affinity amino acid permeases that serve to provide amino acids for use by the translation machinery. TORC1 also promotes growth by sequestering a number of nutrient and general stress-responsive transcription factors in the cytoplasm. TORC1 negatively controls macroautophagy, a process to recycle surplus cytoplasmic mass under nutrient starvation conditions. KOG1 may have a role in binding and recruiting substrates of TORC1. The protein is Target of rapamycin complex 1 subunit KOG1 (KOG1) of Saccharomyces cerevisiae (strain ATCC 204508 / S288c) (Baker's yeast).